The primary structure comprises 325 residues: Natural cytotoxicity triggering receptor 1 (325 aa).

Residues 1–16 (MLPTLTALLCLGLCLS) form the signal peptide. At 17-255 (QRINTEKETL…SAFWDHTTQN (239 aa)) the chain is on the extracellular side. 2 consecutive Ig-like domains span residues 34–118 (KPSI…LVVT) and 129–211 (YPRP…LLIT). A disulfide bridge links Cys-49 with Cys-98. The N-linked (GlcNAc...) asparagine glycan is linked to Asn-139. Cys-144 and Cys-190 are oxidised to a cystine. N-linked (GlcNAc...) asparagine glycosylation is found at Asn-216 and Asn-238. Residues 256 to 273 (LIRIGLACIILITLVWLL) form a helical membrane-spanning segment. At 274–325 (TEDWLSKRKDHEEANRLTNWECRRRWRMQHYFEEEQRNAISMMELKATPGAL) the chain is on the cytoplasmic side.

The protein belongs to the natural cytotoxicity receptor (NCR) family. Interacts with CD3Z and FCER1G. Selectively expressed by NK cells.

The protein localises to the cell membrane. In terms of biological role, cytotoxicity-activating receptor that may contribute to the increased efficiency of activated natural killer (NK) cells to mediate tumor cell lysis. This is Natural cytotoxicity triggering receptor 1 (Ncr1) from Mus musculus (Mouse).